The sequence spans 619 residues: DEAD-box ATP-dependent RNA helicase 35B (619 aa).

2 stretches are compositionally biased toward low complexity: residues 1-10 and 49-58; these read MAAAAAAAAA and PPTTNAVAVA. Residues 1-72 form a disordered region; it reads MAAAAAAAAA…PPRSTSSPAV (72 aa). The short motif at 173-201 is the Q motif element; the sequence is RSFGDLRLPEPILRALRGKGIEKPTPIQV. A Helicase ATP-binding domain is found at 204 to 388; sequence LPVALSGRDM…KSALVKPIIV (185 aa). 217 to 224 contributes to the ATP binding site; it reads AFTGSGKT. The short motif at 336–339 is the DEAD box element; the sequence is DEAD. The 161-residue stretch at 399–559 folds into the Helicase C-terminal domain; sequence DVIQEVEYVK…RLPPILADLD (161 aa). The CCHC-type zinc-finger motif lies at 576–593; the sequence is KGCAFCGGLGHRIEACPK.

Belongs to the DEAD box helicase family. DDX41 subfamily.

It carries out the reaction ATP + H2O = ADP + phosphate + H(+). The chain is DEAD-box ATP-dependent RNA helicase 35B from Oryza sativa subsp. japonica (Rice).